The primary structure comprises 453 residues: GTPase Der (453 aa).

2 consecutive EngA-type G domains span residues 4-169 and 177-352; these read PIVA…PPVT and IKIA…EEHK. GTP is bound by residues 10–17, 57–61, 120–123, 183–190, 230–234, and 295–298; these read GRPNVGKS, DTGGL, NKCE, DTAGI, and NKWD. One can recognise a KH-like domain in the interval 353 to 438; it reads RRVSTSVINE…PIRLLWRSKK (86 aa).

It belongs to the TRAFAC class TrmE-Era-EngA-EngB-Septin-like GTPase superfamily. EngA (Der) GTPase family. As to quaternary structure, associates with the 50S ribosomal subunit.

Its function is as follows. GTPase that plays an essential role in the late steps of ribosome biogenesis. This Nostoc sp. (strain PCC 7120 / SAG 25.82 / UTEX 2576) protein is GTPase Der.